We begin with the raw amino-acid sequence, 415 residues long: MHLLCFLSLACSLLAAALIPSPREAPATVAAFESGLGFSEAEPDGGEVKAFEGKDLEEQLRSVSSVDELMSVLYPDYWKMYKCQLRKGGWQQPTLNTRTGDSVKFAAAHYNTEILKSIDNEWRKTQCMPREVCIDVGKEFGAATNTFFKPPCVSVYRCGGCCNSEGLQCMNTSTGYLSKTLFEITVPLSQGPKPVTISFANHTSCRCMSKLDVYRQVHSIIRRSLPATLPQCQAANKTCPTNYVWNNYMCRCLAQQDFIFYSNVEDDSTNGFHDVCGPNKELDEDTCQCVCKGGLRPSSCGPHKELDRDSCQCVCKNKLFPNSCGANREFDENTCQCVCKRTCPRNQPLNPGKCACECTENTQKCFLKGKKFHHQTCSCYRRPCANRLKHCDPGLSFSEEVCRCVPSYWKRPHLN.

A signal peptide spans 1-31 (MHLLCFLSLACSLLAAALIPSPREAPATVAA). A propeptide spanning residues 32-107 (FESGLGFSEA…RTGDSVKFAA (76 aa)) is cleaved from the precursor. Cystine bridges form between Cys-127–Cys-169, Cys-158–Cys-205, and Cys-162–Cys-207. Asn-171, Asn-201, and Asn-236 each carry an N-linked (GlcNAc...) asparagine glycan. A propeptide spanning residues 224-415 (SLPATLPQCQ…PSYWKRPHLN (192 aa)) is cleaved from the precursor. Repeat copies occupy residues 276-291 (CGPN…QCVC), 300-315 (CGPH…QCVC), 324-339 (CGAN…QCVC), and 343-358 (CPRN…ACEC). The segment at 276–358 (CGPNKELDED…LNPGKCACEC (83 aa)) is 4 X 16 AA repeats of C-X(10)-C-X-C-X(1,3)-C.

Belongs to the PDGF/VEGF growth factor family. In terms of assembly, homodimer; non-covalent and antiparallel. Interacts with FLT4/VEGFR3; the interaction is required for FLT4/VEGFR3 homodimarization and activation. Undergoes a complex proteolytic maturation which generates a variety of processed secreted forms with increased activity toward VEGFR-3, but only the fully processed form could activate VEGFR-2. VEGF-C first form an antiparallel homodimer linked by disulfide bonds. Before secretion, a cleavage occurs between Arg-223 and Ser-224 producing a heterotetramer. The next extracellular step of the processing removes the N-terminal propeptide. Finally the mature VEGF-C is composed mostly of two VEGF homology domains (VHDs) bound by non-covalent interactions. Expressed in adult heart, brain, spleen, lung, liver, skeletal muscle, kidney, testis and intestine with higher levels in heart, brain and kidney. Isoform 4 levels are very low. Isoform 3 is mostly expressed in liver and has reduced expression level in other tissues. Isoform 2 is mostly expressed in brain and kidney, although a lower level expression in other tissues is also detectable.

Its subcellular location is the secreted. Functionally, growth factor active in angiogenesis, and endothelial cell growth, stimulating their proliferation and migration and also has effects on the permeability of blood vessels. May function in angiogenesis of the venous and lymphatic vascular systems during embryogenesis, and also in the maintenance of differentiated lymphatic endothelium in adults. Binds and activates KDR/VEGFR2 and FLT4/VEGFR3 receptors. This Mus musculus (Mouse) protein is Vascular endothelial growth factor C (Vegfc).